A 329-amino-acid polypeptide reads, in one-letter code: GTP 3',8-cyclase (329 aa).

One can recognise a Radical SAM core domain in the interval 8–234; sequence AFARKFYYLR…QLRQRSDGPA (227 aa). Arg17 provides a ligand contact to GTP. Residues Cys24 and Cys28 each coordinate [4Fe-4S] cluster. An S-adenosyl-L-methionine-binding site is contributed by Tyr30. Cys31 contacts [4Fe-4S] cluster. Arg68 contributes to the GTP binding site. Gly72 is an S-adenosyl-L-methionine binding site. Thr99 contacts GTP. An S-adenosyl-L-methionine-binding site is contributed by Ser123. Position 160 (Lys160) interacts with GTP. Met194 serves as a coordination point for S-adenosyl-L-methionine. 2 residues coordinate [4Fe-4S] cluster: Cys257 and Cys260. 262–264 contacts GTP; that stretch reads RLR. Cys274 is a binding site for [4Fe-4S] cluster.

It belongs to the radical SAM superfamily. MoaA family. As to quaternary structure, monomer and homodimer. [4Fe-4S] cluster is required as a cofactor.

The catalysed reaction is GTP + AH2 + S-adenosyl-L-methionine = (8S)-3',8-cyclo-7,8-dihydroguanosine 5'-triphosphate + 5'-deoxyadenosine + L-methionine + A + H(+). It participates in cofactor biosynthesis; molybdopterin biosynthesis. Catalyzes the cyclization of GTP to (8S)-3',8-cyclo-7,8-dihydroguanosine 5'-triphosphate. This is GTP 3',8-cyclase from Escherichia coli O139:H28 (strain E24377A / ETEC).